Here is a 101-residue protein sequence, read N- to C-terminus: MAKESMKAREVKRAKLVAKFATKRAELKATISNVNSSDEERWDAVLKLQQLPRDSARTRQQNRCRITGRPHGFLRKFGLSRIKLREAAMRGEVPGLKKASW.

Belongs to the universal ribosomal protein uS14 family. As to quaternary structure, part of the 30S ribosomal subunit. Contacts proteins S3 and S10.

Binds 16S rRNA, required for the assembly of 30S particles and may also be responsible for determining the conformation of the 16S rRNA at the A site. The chain is Small ribosomal subunit protein uS14 from Pseudoalteromonas atlantica (strain T6c / ATCC BAA-1087).